A 514-amino-acid polypeptide reads, in one-letter code: Coiled-coil domain-containing protein 174 (514 aa).

Disordered regions lie at residues 42-83 (AKPK…DQSR) and 137-162 (TLEK…PDEE). Over residues 63-83 (KRAEKDIEQKAEEDQTLDQSR) the composition is skewed to basic and acidic residues. The stretch at 66 to 98 (EKDIEQKAEEDQTLDQSRKKLEEKAKLYEKMTK) forms a coiled coil. Residues 141-162 (ETDDEEIEPEMEIPPPEDPDEE) show a composition bias toward acidic residues. Coiled-coil stretches lie at residues 203–227 (LLSE…ALRK) and 266–321 (LDML…LENG). Disordered stretches follow at residues 270-291 (REQT…KAAL) and 306-490 (LREE…PSAH). Basic and acidic residues-rich tracts occupy residues 335 to 354 (EVPR…RDTK) and 376 to 388 (KKQE…RDPE). Over residues 405–418 (YSSQNLNSPETSPG) the composition is skewed to polar residues. The span at 420–429 (TEPEISENQK) shows a compositional bias: basic and acidic residues.

The protein resides in the nucleus. Its function is as follows. Probably involved in neuronal development. The chain is Coiled-coil domain-containing protein 174 (CCDC174) from Gallus gallus (Chicken).